A 451-amino-acid chain; its full sequence is UDP-N-acetylmuramate--L-alanine ligase (451 aa).

Residue 110 to 116 (GTHGKTT) coordinates ATP.

This sequence belongs to the MurCDEF family.

The protein resides in the cytoplasm. The catalysed reaction is UDP-N-acetyl-alpha-D-muramate + L-alanine + ATP = UDP-N-acetyl-alpha-D-muramoyl-L-alanine + ADP + phosphate + H(+). It functions in the pathway cell wall biogenesis; peptidoglycan biosynthesis. Cell wall formation. This Francisella tularensis subsp. holarctica (strain FTNF002-00 / FTA) protein is UDP-N-acetylmuramate--L-alanine ligase.